The following is a 157-amino-acid chain: S-ribosylhomocysteine lyase (157 aa).

Histidine 54, histidine 58, and cysteine 126 together coordinate Fe cation.

Belongs to the LuxS family. As to quaternary structure, homodimer. The cofactor is Fe cation.

It catalyses the reaction S-(5-deoxy-D-ribos-5-yl)-L-homocysteine = (S)-4,5-dihydroxypentane-2,3-dione + L-homocysteine. Functionally, involved in the synthesis of autoinducer 2 (AI-2) which is secreted by bacteria and is used to communicate both the cell density and the metabolic potential of the environment. The regulation of gene expression in response to changes in cell density is called quorum sensing. Catalyzes the transformation of S-ribosylhomocysteine (RHC) to homocysteine (HC) and 4,5-dihydroxy-2,3-pentadione (DPD). This is S-ribosylhomocysteine lyase from Bacillus cereus (strain 03BB102).